We begin with the raw amino-acid sequence, 311 residues long: Insulin-like growth factor-binding protein 2 (311 aa).

Positions 1–36 (MALGGVGRGGAARAAWPRLLLAALAPALALAGPALP) are cleaved as a signal peptide. The IGFBP N-terminal domain maps to 38-120 (VLFRCPPCTA…VQGQGTCARP (83 aa)). 6 disulfide bridges follow: C42–C70, C45–C72, C53–C73, C61–C76, C84–C97, and C91–C117. Disordered regions lie at residues 112-168 (QGQG…PLKT) and 188-210 (GKVG…TGRT). In terms of domain architecture, Thyroglobulin type-1 spans 209 to 291 (RTPCQQELDQ…APTIRGDPEC (83 aa)). Disulfide bonds link C212/C246, C257/C268, and C270/C291. A Cell attachment site motif is present at residues 286–288 (RGD).

In terms of assembly, binds IGF2 more than IGF1.

Its subcellular location is the secreted. Its function is as follows. Inhibits IGF-mediated growth and developmental rates. IGF-binding proteins prolong the half-life of the IGFs and have been shown to either inhibit or stimulate the growth promoting effects of the IGFs on cell culture. They alter the interaction of IGFs with their cell surface receptors. The sequence is that of Insulin-like growth factor-binding protein 2 (IGFBP2) from Gallus gallus (Chicken).